The following is a 122-amino-acid chain: Cofilin/actin-depolymerizing factor homolog 1 (122 aa).

The 119-residue stretch at 4–122 folds into the ADF-H domain; that stretch reads GIRVNDNCVT…ESAQDVADLK (119 aa).

This sequence belongs to the actin-binding proteins ADF family. In terms of assembly, interacts with monomeric actin, does not bind to actin polymers.

The protein localises to the cytoplasm. The protein resides in the cytoskeleton. Not involved in actin polymerisation, instead functions to stimulate nucleotide exchange on monomeric actin and influence turnover of the small amount of cytosolic actin microfilaments. Essential for erythrocytic schizogony. The polypeptide is Cofilin/actin-depolymerizing factor homolog 1 (Plasmodium falciparum (isolate 3D7)).